Reading from the N-terminus, the 157-residue chain is Tripartite terminase subunit 2 (157 aa).

Residues 1 to 69 (MSWAKQRVPF…DGEDGHALPD (69 aa)) are disordered. Positions 11-27 (LDDDDGEEENDVQDDVD) are enriched in acidic residues.

Belongs to the herpesviridae TRM2 protein family. Associates with TRM1 and TRM3 to form the tripartite terminase complex.

The protein resides in the host nucleus. Its function is as follows. Component of the molecular motor that translocates viral genomic DNA in empty capsid during DNA packaging. Forms a tripartite terminase complex together with TRM1 and TRM3 in the host cytoplasm. Once the complex reaches the host nucleus, it interacts with the capsid portal vertex. This portal forms a ring in which genomic DNA is translocated into the capsid. This Homo sapiens (Human) protein is Tripartite terminase subunit 2.